The chain runs to 224 residues: Transcriptional regulatory protein DltR (224 aa).

One can recognise a Response regulatory domain in the interval 2-116 (RLLVVEDEKS…ELLARIRLRT (115 aa)). 4-aspartylphosphate is present on aspartate 51. The segment at residues 124 to 222 (ANQLRLGNIR…TKGFGYSLEE (99 aa)) is a DNA-binding region (ompR/PhoB-type).

Post-translationally, phosphorylated by DltS.

The protein resides in the cytoplasm. Functionally, member of the two-component regulatory system DltS/DltR. Regulates the expression of the dlt operon. The polypeptide is Transcriptional regulatory protein DltR (dltR) (Streptococcus agalactiae serotype III (strain NEM316)).